Reading from the N-terminus, the 604-residue chain is Glutamine--fructose-6-phosphate aminotransferase [isomerizing] (604 aa).

Cysteine 2 acts as the Nucleophile; for GATase activity in catalysis. In terms of domain architecture, Glutamine amidotransferase type-2 spans cysteine 2–glutamate 216. 2 consecutive SIS domains span residues leucine 281–alanine 420 and valine 453–proline 594. Lysine 599 acts as the For Fru-6P isomerization activity in catalysis.

As to quaternary structure, homodimer.

It localises to the cytoplasm. The enzyme catalyses D-fructose 6-phosphate + L-glutamine = D-glucosamine 6-phosphate + L-glutamate. Catalyzes the first step in hexosamine metabolism, converting fructose-6P into glucosamine-6P using glutamine as a nitrogen source. This is Glutamine--fructose-6-phosphate aminotransferase [isomerizing] from Thermus thermophilus (strain ATCC BAA-163 / DSM 7039 / HB27).